A 217-amino-acid chain; its full sequence is Ranaspumin (217 aa).

4 cysteine pairs are disulfide-bonded: C18–C67, C38–C114, C125–C168, and C146–C207.

In terms of assembly, monomer. Exclusively expressed in females in the early oviduct, the glandular part of the oviduct (pars convoluta dilata) and in the cloaca.

The protein localises to the secreted. Functionally, acts as a surfactant. Is the major protein constituent (45%) of foam nests. Has no antimicrobial activity, no larvicidal activity, and is not toxic to mice. The protein is Ranaspumin of Leptodactylus vastus (Northeastern pepper frog).